A 946-amino-acid polypeptide reads, in one-letter code: Bifunctional glutamine synthetase adenylyltransferase/adenylyl-removing enzyme (946 aa).

The tract at residues 1-440 is adenylyl removase; that stretch reads MKPLSSPLQQ…VFNELIGDDE (440 aa). The segment at 449–946 is adenylyl transferase; that stretch reads SEQWRELWQD…ASWQKWLVEE (498 aa).

This sequence belongs to the GlnE family. Mg(2+) serves as cofactor.

The enzyme catalyses [glutamine synthetase]-O(4)-(5'-adenylyl)-L-tyrosine + phosphate = [glutamine synthetase]-L-tyrosine + ADP. It carries out the reaction [glutamine synthetase]-L-tyrosine + ATP = [glutamine synthetase]-O(4)-(5'-adenylyl)-L-tyrosine + diphosphate. Its function is as follows. Involved in the regulation of glutamine synthetase GlnA, a key enzyme in the process to assimilate ammonia. When cellular nitrogen levels are high, the C-terminal adenylyl transferase (AT) inactivates GlnA by covalent transfer of an adenylyl group from ATP to specific tyrosine residue of GlnA, thus reducing its activity. Conversely, when nitrogen levels are low, the N-terminal adenylyl removase (AR) activates GlnA by removing the adenylyl group by phosphorolysis, increasing its activity. The regulatory region of GlnE binds the signal transduction protein PII (GlnB) which indicates the nitrogen status of the cell. In Escherichia coli O127:H6 (strain E2348/69 / EPEC), this protein is Bifunctional glutamine synthetase adenylyltransferase/adenylyl-removing enzyme.